The chain runs to 118 residues: Small ribosomal subunit protein uS13 (118 aa).

The interval 94 to 118 (GLPLRGQRTRTNARTRKGPRRPIRK) is disordered.

Belongs to the universal ribosomal protein uS13 family. Part of the 30S ribosomal subunit. Forms a loose heterodimer with protein S19. Forms two bridges to the 50S subunit in the 70S ribosome.

In terms of biological role, located at the top of the head of the 30S subunit, it contacts several helices of the 16S rRNA. In the 70S ribosome it contacts the 23S rRNA (bridge B1a) and protein L5 of the 50S subunit (bridge B1b), connecting the 2 subunits; these bridges are implicated in subunit movement. Contacts the tRNAs in the A and P-sites. The sequence is that of Small ribosomal subunit protein uS13 from Thioalkalivibrio sulfidiphilus (strain HL-EbGR7).